The primary structure comprises 189 residues: Glycerol-3-phosphate acyltransferase (189 aa).

Transmembrane regions (helical) follow at residues methionine 1–leucine 21, lysine 50–alanine 70, alanine 81–glycine 101, methionine 111–phenylalanine 131, and leucine 151–valine 171.

It belongs to the PlsY family. Probably interacts with PlsX.

Its subcellular location is the cell inner membrane. The catalysed reaction is an acyl phosphate + sn-glycerol 3-phosphate = a 1-acyl-sn-glycero-3-phosphate + phosphate. The protein operates within lipid metabolism; phospholipid metabolism. Functionally, catalyzes the transfer of an acyl group from acyl-phosphate (acyl-PO(4)) to glycerol-3-phosphate (G3P) to form lysophosphatidic acid (LPA). This enzyme utilizes acyl-phosphate as fatty acyl donor, but not acyl-CoA or acyl-ACP. This chain is Glycerol-3-phosphate acyltransferase, found in Pseudomonas entomophila (strain L48).